The sequence spans 224 residues: dTTP/UTP pyrophosphatase (224 aa).

Aspartate 77 functions as the Proton acceptor in the catalytic mechanism.

This sequence belongs to the Maf family. YhdE subfamily. The cofactor is a divalent metal cation.

It localises to the cytoplasm. The catalysed reaction is dTTP + H2O = dTMP + diphosphate + H(+). The enzyme catalyses UTP + H2O = UMP + diphosphate + H(+). Its function is as follows. Nucleoside triphosphate pyrophosphatase that hydrolyzes dTTP and UTP. May have a dual role in cell division arrest and in preventing the incorporation of modified nucleotides into cellular nucleic acids. The protein is dTTP/UTP pyrophosphatase of Dehalococcoides mccartyi (strain CBDB1).